The chain runs to 449 residues: Clusterin (449 aa).

The first 22 residues, 1-22 (MMKTLLLFVGLLLTWESGQVLG), serve as a signal peptide directing secretion. Positions 78–81 (KKKK) match the Nuclear localization signal motif. Residue Asn86 is glycosylated (N-linked (GlcNAc...) (complex) asparagine). 5 disulfide bridges follow: Cys102–Cys313, Cys113–Cys305, Cys116–Cys302, Cys121–Cys295, and Cys129–Cys285. Asn103 carries an N-linked (GlcNAc...) asparagine glycan. At Ser133 the chain carries Phosphoserine. 3 N-linked (GlcNAc...) asparagine glycosylation sites follow: Asn145, Asn291, and Asn354. Asn374 is a glycosylation site (N-linked (GlcNAc...) (complex) asparagine). Residue Ser396 is modified to Phosphoserine. The Nuclear localization signal signature appears at 443 to 447 (RKKHR).

This sequence belongs to the clusterin family. Antiparallel disulfide-linked heterodimer of an alpha chain and a beta chain. Self-associates and forms higher oligomers. Interacts with a broad range of misfolded proteins, including APP, APOC2 and LYZ. Slightly acidic pH promotes interaction with misfolded proteins. Forms high-molecular weight oligomers upon interaction with misfolded proteins. Interacts with APOA1, LRP2, CLUAP1 and PON1. Interacts with the complement membrane attack complex. Interacts (via alpha chain) with XRCC6. Interacts with SYVN1, COMMD1, BTRC, CUL1 and with ubiquitin and SCF (SKP1-CUL1-F-box protein) E3 ubiquitin-protein ligase complexes. Interacts (via alpha chain) with BAX in stressed cells, where BAX undergoes a conformation change leading to association with the mitochondrial membrane. Does not interact with BAX in unstressed cells. Found in a complex with LTF, CLU, EPPIN and SEMG1. Interacts (immaturely glycosylated pre-secreted form) with HSPA5; this interaction promotes CLU stability and facilitates stress-induced CLU retrotranslocation from the secretory pathway to the mitochondria, thereby reducing stress-induced apoptosis by stabilizing mitochondrial membrane integrity. Interacts (isoform 4) with BCL2L1; this interaction releases and activates BAX and promotes cell death. Interacts with TGFBR2 and ACVR1. Interacts (secreted form) with STMN3; this interaction may act as an important modulator during neuronal differentiation. Interacts with VLDLR and LRP8. Proteolytically cleaved on its way through the secretory system, probably within the Golgi lumen. Proteolytic cleavage is not necessary for its chaperone activity. All non-secreted forms are not proteolytically cleaved. Chaperone activity of uncleaved forms is dependent on a non-reducing environment. In terms of processing, polyubiquitinated, leading to proteasomal degradation. Under cellular stress, the intracellular level of cleaved form is reduced due to proteasomal degradation. Post-translationally, extensively glycosylated with sulfated N-linked carbohydrates. About 30% of the protein mass is comprised of complex N-linked carbohydrate. Endoplasmic reticulum (ER) stress induces changes in glycosylation status and increases level of hypoglycosylated forms. Core carbohydrates are essential for chaperone activity. Non-secreted forms are hypoglycosylated or unglycosylated. Detected in blood plasma, cerebrospinal fluid, milk, seminal plasma and colon mucosa. Detected in the germinal center of colon lymphoid nodules and in colon parasympathetic ganglia of the Auerbach plexus (at protein level). Ubiquitous. Detected in brain, testis, ovary, liver and pancreas, and at lower levels in kidney, heart, spleen and lung.

It localises to the secreted. The protein localises to the cytoplasm. Its subcellular location is the nucleus. It is found in the mitochondrion membrane. The protein resides in the cytosol. It localises to the microsome. The protein localises to the endoplasmic reticulum. Its subcellular location is the mitochondrion. It is found in the perinuclear region. The protein resides in the cytoplasmic vesicle. It localises to the secretory vesicle. The protein localises to the chromaffin granule. Functions as extracellular chaperone that prevents aggregation of non native proteins. Prevents stress-induced aggregation of blood plasma proteins. Inhibits formation of amyloid fibrils by APP, APOC2, B2M, CALCA, CSN3, SNCA and aggregation-prone LYZ variants (in vitro). Does not require ATP. Maintains partially unfolded proteins in a state appropriate for subsequent refolding by other chaperones, such as HSPA8/HSC70. Does not refold proteins by itself. Binding to cell surface receptors triggers internalization of the chaperone-client complex and subsequent lysosomal or proteasomal degradation. Protects cells against apoptosis and against cytolysis by complement: inhibits assembly of the complement membrane attack complex (MAC) by preventing polymerization of C9 pore component of the MAC complex. Intracellular forms interact with ubiquitin and SCF (SKP1-CUL1-F-box protein) E3 ubiquitin-protein ligase complexes and promote the ubiquitination and subsequent proteasomal degradation of target proteins. Promotes proteasomal degradation of COMMD1 and IKBKB. Modulates NF-kappa-B transcriptional activity. A mitochondrial form suppresses BAX-dependent release of cytochrome c into the cytoplasm and inhibit apoptosis. Plays a role in the regulation of cell proliferation. An intracellular form suppresses stress-induced apoptosis by stabilizing mitochondrial membrane integrity through interaction with HSPA5. Secreted form does not affect caspase or BAX-mediated intrinsic apoptosis and TNF-induced NF-kappa-B-activity. Secreted form act as an important modulator during neuronal differentiation through interaction with STMN3. Plays a role in the clearance of immune complexes that arise during cell injury. Functionally, does not affect caspase or BAX-mediated intrinsic apoptosis and TNF-induced NF-kappa-B-activity. Its function is as follows. Does not affect caspase or BAX-mediated intrinsic apoptosis and TNF-induced NF-kappa-B-activity. Promotes cell death through interaction with BCL2L1 that releases and activates BAX. The chain is Clusterin from Homo sapiens (Human).